Here is a 447-residue protein sequence, read N- to C-terminus: tRNA modification GTPase MnmE (447 aa).

(6S)-5-formyl-5,6,7,8-tetrahydrofolate-binding residues include R22, E81, and K121. The TrmE-type G domain maps to 217–373; the sequence is GIVLAITGET…LMSEIVSYAE (157 aa). N227 serves as a coordination point for K(+). GTP contacts are provided by residues 227 to 232, 246 to 252, and 271 to 274; these read NTGKSS, SDIPGTT, and DTAG. Position 231 (S231) interacts with Mg(2+). S246, I248, and T251 together coordinate K(+). T252 contributes to the Mg(2+) binding site. K447 is a binding site for (6S)-5-formyl-5,6,7,8-tetrahydrofolate.

The protein belongs to the TRAFAC class TrmE-Era-EngA-EngB-Septin-like GTPase superfamily. TrmE GTPase family. Homodimer. Heterotetramer of two MnmE and two MnmG subunits. Requires K(+) as cofactor.

The protein resides in the cytoplasm. Its function is as follows. Exhibits a very high intrinsic GTPase hydrolysis rate. Involved in the addition of a carboxymethylaminomethyl (cmnm) group at the wobble position (U34) of certain tRNAs, forming tRNA-cmnm(5)s(2)U34. The sequence is that of tRNA modification GTPase MnmE from Orientia tsutsugamushi (strain Boryong) (Rickettsia tsutsugamushi).